The sequence spans 469 residues: Soluble pyridine nucleotide transhydrogenase (469 aa).

39–48 (ERENSVGGGC) contacts FAD.

Belongs to the class-I pyridine nucleotide-disulfide oxidoreductase family. The cofactor is FAD.

The protein resides in the cytoplasm. It catalyses the reaction NAD(+) + NADPH = NADH + NADP(+). Its function is as follows. Conversion of NADPH, generated by peripheral catabolic pathways, to NADH, which can enter the respiratory chain for energy generation. The polypeptide is Soluble pyridine nucleotide transhydrogenase (Photobacterium profundum (strain SS9)).